The following is a 438-amino-acid chain: Trigger factor (438 aa).

The region spanning 160–231 (SDQVTIEEQG…IMDVKTKQLQ (72 aa)) is the PPIase FKBP-type domain. Residues 407-438 (AQLSGPQAETVAADQGEQQAEGQEESAEKSEE) form a disordered region. The segment covering 418–427 (AADQGEQQAE) has biased composition (low complexity).

It belongs to the FKBP-type PPIase family. Tig subfamily.

The protein localises to the cytoplasm. It carries out the reaction [protein]-peptidylproline (omega=180) = [protein]-peptidylproline (omega=0). Its function is as follows. Involved in protein export. Acts as a chaperone by maintaining the newly synthesized protein in an open conformation. Functions as a peptidyl-prolyl cis-trans isomerase. The sequence is that of Trigger factor from Deinococcus deserti (strain DSM 17065 / CIP 109153 / LMG 22923 / VCD115).